The following is a 219-amino-acid chain: uncharacterized protein (219 aa).

The region spanning 57 to 158 is the HD domain; the sequence is QLEHMTRAAM…LSEASRQTLL (102 aa).

This is an uncharacterized protein from Acanthamoeba polyphaga mimivirus (APMV).